A 110-amino-acid polypeptide reads, in one-letter code: Cytochrome subunit of sulfide dehydrogenase (110 aa).

The N-terminal stretch at 1–16 (MLAAAPLLLASGNGFA) is a signal peptide. Positions 41, 44, 45, and 83 each coordinate heme c.

In terms of assembly, dimer of one cytochrome and one flavoprotein. In terms of processing, binds 1 heme c group covalently per subunit.

The protein resides in the periplasm. Functionally, monoheme cytochrome that function as the electron transport subunit of sulfide dehydrogenase. The polypeptide is Cytochrome subunit of sulfide dehydrogenase (fccA) (Chlorobaculum tepidum (strain ATCC 49652 / DSM 12025 / NBRC 103806 / TLS) (Chlorobium tepidum)).